A 454-amino-acid chain; its full sequence is Serine/threonine-protein kinase NLK2 (454 aa).

Residues 67–356 (PEPDRPIGYG…AKDALAHPYL (290 aa)) form the Protein kinase domain. Residues 73–81 (IGYGAFGVV) and Lys-96 each bind ATP. The active-site Proton acceptor is Asp-193.

It belongs to the protein kinase superfamily. CMGC Ser/Thr protein kinase family. MAP kinase subfamily. In terms of assembly, interacts with sox11, hmgxb4/hmg2l1, rnf138/narf, stat3.1 and mef2a. Requires Mg(2+) as cofactor.

The protein resides in the nucleus. The protein localises to the cytoplasm. The enzyme catalyses L-seryl-[protein] + ATP = O-phospho-L-seryl-[protein] + ADP + H(+). It catalyses the reaction L-threonyl-[protein] + ATP = O-phospho-L-threonyl-[protein] + ADP + H(+). With respect to regulation, activated by tyrosine and threonine phosphorylation. Negatively regulates Wnt/beta-catenin-signaling during development. Plays a role together with sox11 in neural induction during early embryogenesis. Involved in TGFbeta-mediated mesoderm induction in early embryos, acting downstream of map3k7/tak1 to phosphorylate stat3. Augments the rnf138/narf-directed ubiquitination and degradation of tcf/lef by enhancing the association of rnf138/narf and tcf/lef. Phosphorylates mef2a to play a role in anterior neural development, including eye formation. This Xenopus tropicalis (Western clawed frog) protein is Serine/threonine-protein kinase NLK2 (nlk.2).